The primary structure comprises 261 residues: Thiamine thiazole synthase (261 aa).

NAD(+)-binding positions include Ala-33, 52-53 (ER), Gly-60, Val-124, and 152-154 (HVD). Positions 154 and 169 each coordinate Fe cation. Ile-219 contributes to the NAD(+) binding site. Arg-229 contacts glycine.

Belongs to the THI4 family. Homooctamer; tetramer of dimers. The cofactor is Fe(2+).

It carries out the reaction hydrogen sulfide + glycine + NAD(+) = ADP-5-ethyl-4-methylthiazole-2-carboxylate + nicotinamide + 3 H2O + H(+). Its pathway is cofactor biosynthesis; thiamine diphosphate biosynthesis. Involved in the biosynthesis of the thiazole moiety of thiamine. Catalyzes the conversion of NAD and glycine to adenosine diphosphate 5-(2-hydroxyethyl)-4-methylthiazole-2-carboxylate (ADT), an adenylated thiazole intermediate, using free sulfide as a source of sulfur. This chain is Thiamine thiazole synthase, found in Pyrobaculum aerophilum (strain ATCC 51768 / DSM 7523 / JCM 9630 / CIP 104966 / NBRC 100827 / IM2).